We begin with the raw amino-acid sequence, 398 residues long: Protein RecA (398 aa).

Residue 83 to 90 (GPESSGKT) coordinates ATP. The tract at residues 351 to 398 (AGQKNDKKSKLEEKANAGAGISEASEPDSSAEEDFEEFAPIDIGSLGE) is disordered. The span at 354–365 (KNDKKSKLEEKA) shows a compositional bias: basic and acidic residues. Over residues 375–389 (SEPDSSAEEDFEEFA) the composition is skewed to acidic residues.

This sequence belongs to the RecA family.

The protein localises to the cytoplasm. Functionally, can catalyze the hydrolysis of ATP in the presence of single-stranded DNA, the ATP-dependent uptake of single-stranded DNA by duplex DNA, and the ATP-dependent hybridization of homologous single-stranded DNAs. It interacts with LexA causing its activation and leading to its autocatalytic cleavage. The polypeptide is Protein RecA (Ruminococcus albus (strain ATCC 27210 / DSM 20455 / JCM 14654 / NCDO 2250 / 7)).